The primary structure comprises 329 residues: GTPase Obg (329 aa).

Residues 1 to 159 (MQFIDEAKIF…MWVWLHLKLL (159 aa)) enclose the Obg domain. The 168-residue stretch at 160–327 (SDVGLVGLPN…LLANILSELQ (168 aa)) folds into the OBG-type G domain. Residues 166–173 (GLPNAGKS), 191–195 (FTTLT), 212–215 (DIPG), 279–282 (TKTD), and 308–310 (SSY) each bind GTP. Positions 173 and 193 each coordinate Mg(2+).

The protein belongs to the TRAFAC class OBG-HflX-like GTPase superfamily. OBG GTPase family. In terms of assembly, monomer. Mg(2+) is required as a cofactor.

It is found in the cytoplasm. Functionally, an essential GTPase which binds GTP, GDP and possibly (p)ppGpp with moderate affinity, with high nucleotide exchange rates and a fairly low GTP hydrolysis rate. Plays a role in control of the cell cycle, stress response, ribosome biogenesis and in those bacteria that undergo differentiation, in morphogenesis control. This Orientia tsutsugamushi (strain Boryong) (Rickettsia tsutsugamushi) protein is GTPase Obg.